The sequence spans 189 residues: Probable RNA 2'-phosphotransferase (189 aa).

The protein belongs to the KptA/TPT1 family.

Removes the 2'-phosphate from RNA via an intermediate in which the phosphate is ADP-ribosylated by NAD followed by a presumed transesterification to release the RNA and generate ADP-ribose 1''-2''-cyclic phosphate (APPR&gt;P). May function as an ADP-ribosylase. The polypeptide is Probable RNA 2'-phosphotransferase (Streptomyces griseus subsp. griseus (strain JCM 4626 / CBS 651.72 / NBRC 13350 / KCC S-0626 / ISP 5235)).